Here is a 292-residue protein sequence, read N- to C-terminus: Trimeric intracellular cation channel type B (292 aa).

At 1–16 the chain is on the lumenal side; sequence MEYPWDDLTLAFSRTS. Residues 17-34 traverse the membrane as a helical segment; it reads MFPFFDIAHYLVSVMALK. Residues 35–47 lie on the Cytoplasmic side of the membrane; it reads QRPGAVAAAWNNP. Residues 48 to 69 traverse the membrane as a helical segment; it reads LASWLSAMLHCFGGGILSCMLL. Over 70 to 82 the chain is Lumenal; sequence AESPLKFLTNHTN. The chain crosses the membrane as a helical span at residues 83 to 100; the sequence is ILLASSIWYIVFFCPRDL. The Cytoplasmic segment spans residues 101–103; that stretch reads VSQ. The helical transmembrane segment at 104–122 threads the bilayer; the sequence is GYSYQPIQFLAAGMKEVTR. 2 residues coordinate a 1,2-diacyl-sn-glycero-3-phospho-(1D-myo-inositol-4,5-bisphosphate): K118 and R122. Topologically, residues 123–140 are lumenal; the sequence is TWKIVGGVSDANSYYRNA. Residues 141–158 form a helical membrane-spanning segment; sequence WIVMIVVGWARGAGGAVV. At 159–178 the chain is on the cytoplasmic side; the sequence is TACEQLLKGDWKPEGDEWLK. A helical membrane pass occupies residues 179 to 195; the sequence is MSFPCKITLLGSIMFTF. At 196 to 206 the chain is on the lumenal side; it reads QHTRHLAISKH. Residues 207 to 225 form a helical membrane-spanning segment; that stretch reads DLMFLYTIFLVTIKVTMMM. Over 226–292 the chain is Cytoplasmic; the sequence is TKDTAVTLTP…GAKRHAKKED (67 aa). The disordered stretch occupies residues 248–292; sequence RQQQQFSSSEKKTEVKPSSNGSASSASKRGAEPSGGAKRHAKKED. The segment covering 265 to 274 has biased composition (low complexity); sequence SSNGSASSAS.

It belongs to the TMEM38 family. Homotrimer; conformation seems to be controled by binding to diacylglycerol (DAG). As to expression, widely expressed.

The protein resides in the endoplasmic reticulum membrane. The catalysed reaction is K(+)(in) = K(+)(out). Its activity is regulated as follows. Channel activity is activated by increased cytosolic Ca(2+) levels and blocked by luminal high Ca(2+) levels. In terms of biological role, intracellular monovalent cation channel required for maintenance of rapid intracellular calcium release. Acts as a potassium counter-ion channel that functions in synchronization with calcium release from intracellular stores. Activated by increased cytosolic Ca(2+) levels. This is Trimeric intracellular cation channel type B (Tmem38b) from Mus musculus (Mouse).